We begin with the raw amino-acid sequence, 433 residues long: Chitinase-like protein EN03 (433 aa).

A signal peptide spans 1-16; sequence MKLFIALVGLLALAKA. The region spanning 23 to 433 is the GH18 domain; the sequence is SKVLCYYDSR…PILRAAKYRL (411 aa). A disulfide bridge connects residues C27 and C54. N220 carries an N-linked (GlcNAc...) asparagine glycan. Cysteines 337 and 418 form a disulfide.

It belongs to the glycosyl hydrolase 18 family. IDGF subfamily.

It localises to the secreted. This chain is Chitinase-like protein EN03, found in Bombyx mori (Silk moth).